The chain runs to 202 residues: GPI-anchored hemophore cfmB (202 aa).

Residues 1–18 (MHFSRTSLILFAAGLASA) form the signal peptide. A CFEM domain is found at 19-108 (QLPNVPGCSL…STTASETATT (90 aa)). 4 disulfides stabilise this stretch: Cys26–Cys67, Cys30–Cys62, Cys40–Cys48, and Cys50–Cys83. A heme-binding site is contributed by Asp45. Residues 94–171 (PVGAASTTAS…PSSQSTSASA (78 aa)) are disordered. Positions 97–171 (AASTTASETA…PSSQSTSASA (75 aa)) are enriched in low complexity. Asn180 carries the GPI-anchor amidated asparagine lipid modification. Residues 181–202 (AGSEKANVAGVVAVAAAALYLL) constitute a propeptide, removed in mature form.

It belongs to the RBT5 family. The GPI-anchor is attached to the protein in the endoplasmic reticulum and serves to target the protein to the cell surface. There, the glucosamine-inositol phospholipid moiety is cleaved off and the GPI-modified mannoprotein is covalently attached via its lipidless GPI glycan remnant to the 1,6-beta-glucan of the outer cell wall layer.

It is found in the secreted. It localises to the cell wall. The protein resides in the cell membrane. Functionally, GPI-anchored cell wall protein involved in stabilizing the cell wall. Not implicated in virulence, heme uptake and biofilm formation. The protein is GPI-anchored hemophore cfmB of Aspergillus fumigatus (strain ATCC MYA-4609 / CBS 101355 / FGSC A1100 / Af293) (Neosartorya fumigata).